Consider the following 384-residue polypeptide: Isoafricanol synthase (384 aa).

The Mg(2+) site is built by Asp-95, Asn-245, Ser-249, and Glu-253.

The protein belongs to the terpene synthase family. Mg(2+) serves as cofactor.

It catalyses the reaction (2E,6E)-farnesyl diphosphate + H2O = (+)-isoafricanol + diphosphate. Functionally, catalyzes the cyclization of farnesyl diphosphate (FPP) to isoafricanol. The polypeptide is Isoafricanol synthase (Streptomyces violaceusniger (strain Tu 4113)).